Consider the following 178-residue polypeptide: Protein GrpE (178 aa).

2 stretches are compositionally biased toward basic and acidic residues: residues 1 to 19 and 30 to 42; these read MAKH…KEEA and SPEK…ANER. The segment at 1–42 is disordered; that stretch reads MAKHKQEEHPEDVEVKEEAVETAEQAESASPEKSELELANER.

Belongs to the GrpE family. As to quaternary structure, homodimer.

It localises to the cytoplasm. Participates actively in the response to hyperosmotic and heat shock by preventing the aggregation of stress-denatured proteins, in association with DnaK and GrpE. It is the nucleotide exchange factor for DnaK and may function as a thermosensor. Unfolded proteins bind initially to DnaJ; upon interaction with the DnaJ-bound protein, DnaK hydrolyzes its bound ATP, resulting in the formation of a stable complex. GrpE releases ADP from DnaK; ATP binding to DnaK triggers the release of the substrate protein, thus completing the reaction cycle. Several rounds of ATP-dependent interactions between DnaJ, DnaK and GrpE are required for fully efficient folding. The polypeptide is Protein GrpE (Streptococcus sanguinis (strain SK36)).